The chain runs to 185 residues: Peptidyl-tRNA hydrolase (185 aa).

Position 14 (tyrosine 14) interacts with tRNA. Histidine 19 (proton acceptor) is an active-site residue. Residues tyrosine 65, asparagine 67, and asparagine 113 each coordinate tRNA.

Belongs to the PTH family. Monomer.

It is found in the cytoplasm. It carries out the reaction an N-acyl-L-alpha-aminoacyl-tRNA + H2O = an N-acyl-L-amino acid + a tRNA + H(+). Hydrolyzes ribosome-free peptidyl-tRNAs (with 1 or more amino acids incorporated), which drop off the ribosome during protein synthesis, or as a result of ribosome stalling. In terms of biological role, catalyzes the release of premature peptidyl moieties from peptidyl-tRNA molecules trapped in stalled 50S ribosomal subunits, and thus maintains levels of free tRNAs and 50S ribosomes. In Rickettsia canadensis (strain McKiel), this protein is Peptidyl-tRNA hydrolase.